The chain runs to 239 residues: Fatty acid metabolism regulator protein (239 aa).

Positions 6-74 (QSPAGFAEEY…HGKPTKVNNF (69 aa)) constitute an HTH gntR-type domain. Residues 34–53 (ERELSELIGVTRTTLREVLQ) constitute a DNA-binding region (H-T-H motif).

In terms of assembly, homodimer.

The protein resides in the cytoplasm. Functionally, multifunctional regulator of fatty acid metabolism. The sequence is that of Fatty acid metabolism regulator protein from Escherichia fergusonii (strain ATCC 35469 / DSM 13698 / CCUG 18766 / IAM 14443 / JCM 21226 / LMG 7866 / NBRC 102419 / NCTC 12128 / CDC 0568-73).